The sequence spans 328 residues: Homeobox protein DLX-2 (328 aa).

Composition is skewed to polar residues over residues Q16–Q28 and E52–H72. 3 disordered regions span residues Q16–G81, W211–S270, and L300–F328. The homeobox DNA-binding region spans V152–W211. S232 carries the post-translational modification Phosphoserine. Positions A250 to S264 are enriched in gly residues.

The protein belongs to the distal-less homeobox family. In terms of assembly, interacts (via homeobox DNA-binding domain) with POU4F2; this interaction enhances retinal ganglion cell (RGC) differentiation.

The protein resides in the nucleus. In terms of biological role, acts as a transcriptional activator. Activates transcription of CGA/alpha-GSU, via binding to the downstream activin regulatory element (DARE) in the gene promoter. Plays a role in terminal differentiation of interneurons, such as amacrine and bipolar cells in the developing retina. Likely to play a regulatory role in the development of the ventral forebrain. May play a role in craniofacial patterning and morphogenesis. The polypeptide is Homeobox protein DLX-2 (DLX2) (Homo sapiens (Human)).